A 519-amino-acid polypeptide reads, in one-letter code: Pleckstrin homology domain-containing family A member 8 (519 aa).

The PH domain occupies M1–A93. Phosphothreonine is present on T139. A Phosphoserine modification is found at S145. A Phosphothreonine modification is found at T153. The tract at residues G274–E302 is disordered. The span at D282–E298 shows a compositional bias: low complexity. Residues T310–V519 form a glycolipid transfer protein homology domain region.

In terms of assembly, homodimer. Interacts with ARF1; the interaction together with phosphatidylinositol 4-phosphate binding is required for FAPP2 GlcCer transfer ability.

Its subcellular location is the golgi apparatus. The protein resides in the trans-Golgi network membrane. It localises to the membrane. In terms of biological role, cargo transport protein that is required for apical transport from the trans-Golgi network (TGN). Transports AQP2 from the trans-Golgi network (TGN) to sites of AQP2 phosphorylation. Mediates the non-vesicular transport of glucosylceramide (GlcCer) from the trans-Golgi network (TGN) to the plasma membrane and plays a pivotal role in the synthesis of complex glycosphingolipids. Binding of both phosphatidylinositol 4-phosphate (PIP) and ARF1 are essential for the GlcCer transfer ability. Also required for primary cilium formation, possibly by being involved in the transport of raft lipids to the apical membrane, and for membrane tubulation. The protein is Pleckstrin homology domain-containing family A member 8 (PLEKHA8) of Canis lupus familiaris (Dog).